Consider the following 338-residue polypeptide: Lipoate-protein ligase A (338 aa).

Positions 29 to 216 constitute a BPL/LPL catalytic domain; that stretch reads PATQRVLFLW…AFFSHYGERV (188 aa). Residues Arg71, 76–79, and Lys134 contribute to the ATP site; that span reads GAVF. Lys134 serves as a coordination point for (R)-lipoate.

The protein belongs to the LplA family. Monomer.

It is found in the cytoplasm. The catalysed reaction is L-lysyl-[lipoyl-carrier protein] + (R)-lipoate + ATP = N(6)-[(R)-lipoyl]-L-lysyl-[lipoyl-carrier protein] + AMP + diphosphate + H(+). Its pathway is protein modification; protein lipoylation via exogenous pathway; protein N(6)-(lipoyl)lysine from lipoate: step 1/2. The protein operates within protein modification; protein lipoylation via exogenous pathway; protein N(6)-(lipoyl)lysine from lipoate: step 2/2. Catalyzes both the ATP-dependent activation of exogenously supplied lipoate to lipoyl-AMP and the transfer of the activated lipoyl onto the lipoyl domains of lipoate-dependent enzymes. The protein is Lipoate-protein ligase A of Klebsiella pneumoniae subsp. pneumoniae (strain ATCC 700721 / MGH 78578).